We begin with the raw amino-acid sequence, 355 residues long: 4-hydroxy-3-methylbut-2-en-1-yl diphosphate synthase (flavodoxin) (355 aa).

Residues Cys266, Cys269, Cys301, and Glu308 each contribute to the [4Fe-4S] cluster site.

Belongs to the IspG family. It depends on [4Fe-4S] cluster as a cofactor.

The enzyme catalyses (2E)-4-hydroxy-3-methylbut-2-enyl diphosphate + oxidized [flavodoxin] + H2O + 2 H(+) = 2-C-methyl-D-erythritol 2,4-cyclic diphosphate + reduced [flavodoxin]. It participates in isoprenoid biosynthesis; isopentenyl diphosphate biosynthesis via DXP pathway; isopentenyl diphosphate from 1-deoxy-D-xylulose 5-phosphate: step 5/6. Its function is as follows. Converts 2C-methyl-D-erythritol 2,4-cyclodiphosphate (ME-2,4cPP) into 1-hydroxy-2-methyl-2-(E)-butenyl 4-diphosphate. The protein is 4-hydroxy-3-methylbut-2-en-1-yl diphosphate synthase (flavodoxin) of Caldanaerobacter subterraneus subsp. tengcongensis (strain DSM 15242 / JCM 11007 / NBRC 100824 / MB4) (Thermoanaerobacter tengcongensis).